We begin with the raw amino-acid sequence, 818 residues long: IQ and AAA domain-containing protein 1-like (818 aa).

Residues glutamine 206–glutamate 235 form the IQ domain. Disordered regions lie at residues glutamine 344–glycine 377 and glutamate 458–threonine 482. Residues arginine 463–lysine 476 are compositionally biased toward basic residues. Glycine 567–lysine 574 contacts ATP. The disordered stretch occupies residues serine 795–lysine 818. The span at histidine 798–lysine 818 shows a compositional bias: basic and acidic residues.

This sequence belongs to the AAA ATPase family.

The chain is IQ and AAA domain-containing protein 1-like (IQCA1L) from Homo sapiens (Human).